The sequence spans 447 residues: Tektin-4 (447 aa).

Coiled coils occupy residues 114-143, 324-348, and 375-423; these read KSEL…RALD, KILS…DKEA, and FRLM…TNSL.

The protein belongs to the tektin family. As to quaternary structure, microtubule inner protein component of sperm flagellar doublet microtubules. In terms of processing, ubiquitinated, leading to its degradation. Deubiquitinated by USP16, promoting its stability.

Its subcellular location is the cytoplasm. The protein localises to the cytoskeleton. The protein resides in the cilium axoneme. It is found in the flagellum axoneme. Its function is as follows. Microtubule inner protein (MIP) part of the dynein-decorated doublet microtubules (DMTs) in cilia and flagellar axoneme. Forms filamentous polymers in the walls of ciliary and flagellar microtubules. Contributes to normal sperm motility. The sequence is that of Tektin-4 (Tekt4) from Rattus norvegicus (Rat).